Reading from the N-terminus, the 310-residue chain is Ribosomal RNA small subunit methyltransferase H (310 aa).

S-adenosyl-L-methionine is bound by residues 33–35 (AGH), D53, Y83, D100, and Q107.

Belongs to the methyltransferase superfamily. RsmH family.

The protein resides in the cytoplasm. The enzyme catalyses cytidine(1402) in 16S rRNA + S-adenosyl-L-methionine = N(4)-methylcytidine(1402) in 16S rRNA + S-adenosyl-L-homocysteine + H(+). In terms of biological role, specifically methylates the N4 position of cytidine in position 1402 (C1402) of 16S rRNA. This is Ribosomal RNA small subunit methyltransferase H from Clostridium perfringens (strain ATCC 13124 / DSM 756 / JCM 1290 / NCIMB 6125 / NCTC 8237 / Type A).